A 179-amino-acid chain; its full sequence is ATP-dependent protease subunit HslV (179 aa).

The active site involves threonine 7. Residues glycine 162, cysteine 165, and threonine 168 each contribute to the Na(+) site.

It belongs to the peptidase T1B family. HslV subfamily. A double ring-shaped homohexamer of HslV is capped on each side by a ring-shaped HslU homohexamer. The assembly of the HslU/HslV complex is dependent on binding of ATP.

Its subcellular location is the cytoplasm. The enzyme catalyses ATP-dependent cleavage of peptide bonds with broad specificity.. Allosterically activated by HslU binding. Protease subunit of a proteasome-like degradation complex believed to be a general protein degrading machinery. This is ATP-dependent protease subunit HslV from Saccharophagus degradans (strain 2-40 / ATCC 43961 / DSM 17024).